Here is a 179-residue protein sequence, read N- to C-terminus: Shikimate kinase (179 aa).

15–20 (GAGKTS) provides a ligand contact to ATP. A Mg(2+)-binding site is contributed by Thr-19. Asp-37, Arg-61, and Gly-83 together coordinate substrate. Arg-123 serves as a coordination point for ATP. Arg-142 is a binding site for substrate.

It belongs to the shikimate kinase family. In terms of assembly, monomer. Requires Mg(2+) as cofactor.

The protein localises to the cytoplasm. The enzyme catalyses shikimate + ATP = 3-phosphoshikimate + ADP + H(+). It functions in the pathway metabolic intermediate biosynthesis; chorismate biosynthesis; chorismate from D-erythrose 4-phosphate and phosphoenolpyruvate: step 5/7. In terms of biological role, catalyzes the specific phosphorylation of the 3-hydroxyl group of shikimic acid using ATP as a cosubstrate. The protein is Shikimate kinase of Coxiella burnetii (strain CbuG_Q212) (Coxiella burnetii (strain Q212)).